A 164-amino-acid chain; its full sequence is S-ribosylhomocysteine lyase (164 aa).

The Fe cation site is built by His61, His65, and Cys131.

It belongs to the LuxS family. As to quaternary structure, homodimer. Fe cation serves as cofactor.

It carries out the reaction S-(5-deoxy-D-ribos-5-yl)-L-homocysteine = (S)-4,5-dihydroxypentane-2,3-dione + L-homocysteine. Involved in the synthesis of autoinducer 2 (AI-2) which is secreted by bacteria and is used to communicate both the cell density and the metabolic potential of the environment. The regulation of gene expression in response to changes in cell density is called quorum sensing. Catalyzes the transformation of S-ribosylhomocysteine (RHC) to homocysteine (HC) and 4,5-dihydroxy-2,3-pentadione (DPD). In Bifidobacterium longum (strain DJO10A), this protein is S-ribosylhomocysteine lyase.